An 862-amino-acid polypeptide reads, in one-letter code: Chaperone protein ClpB 1 (862 aa).

A Clp R domain is found at 5 to 147 (AEQFTEQAWA…KEAITAVRGN (143 aa)). Repeat stretches follow at residues 8-72 (FTEQ…LQRL) and 84-147 (LGRS…VRGN). Residues 160–341 (ESLAKYGRDL…RRFQQVLVDQ (182 aa)) form an NBD1 region. Residue 207 to 214 (GEPGVGKT) participates in ATP binding. The segment at 342-550 (PTVPDTISIL…IAEVIAKWTG (209 aa)) is linker. A coiled-coil region spans residues 392–526 (IDLVDESAAR…QEDLLEDEDG (135 aa)). An NBD2 region spans residues 560 to 771 (EMEKLLQLED…RLDDQIIFRS (212 aa)). 610-617 (GPTGVGKT) is an ATP binding site. Positions 772 to 862 (LEKEELRRIV…DAGDDKLSIS (91 aa)) are C-terminal.

The protein belongs to the ClpA/ClpB family. Homohexamer. The oligomerization is ATP-dependent.

It localises to the cytoplasm. In terms of biological role, part of a stress-induced multi-chaperone system, it is involved in the recovery of the cell from heat-induced damage, in cooperation with DnaK, DnaJ and GrpE. Acts before DnaK, in the processing of protein aggregates. Protein binding stimulates the ATPase activity; ATP hydrolysis unfolds the denatured protein aggregates, which probably helps expose new hydrophobic binding sites on the surface of ClpB-bound aggregates, contributing to the solubilization and refolding of denatured protein aggregates by DnaK. The sequence is that of Chaperone protein ClpB 1 (clpB1) from Parasynechococcus marenigrum (strain WH8102).